We begin with the raw amino-acid sequence, 495 residues long: ATP synthase subunit beta, chloroplastic (495 aa).

Residue Gly172–Thr179 participates in ATP binding.

The protein belongs to the ATPase alpha/beta chains family. In terms of assembly, F-type ATPases have 2 components, CF(1) - the catalytic core - and CF(0) - the membrane proton channel. CF(1) has five subunits: alpha(3), beta(3), gamma(1), delta(1), epsilon(1). CF(0) has four main subunits: a(1), b(1), b'(1) and c(9-12).

It is found in the plastid. It localises to the chloroplast thylakoid membrane. The enzyme catalyses ATP + H2O + 4 H(+)(in) = ADP + phosphate + 5 H(+)(out). Functionally, produces ATP from ADP in the presence of a proton gradient across the membrane. The catalytic sites are hosted primarily by the beta subunits. The polypeptide is ATP synthase subunit beta, chloroplastic (Hyacinthoides non-scripta (English bluebell)).